A 134-amino-acid polypeptide reads, in one-letter code: Histone H2A (134 aa).

Gly residues predominate over residues 1 to 11; it reads MTGGGKSGGKA. The disordered stretch occupies residues 1–24; it reads MTGGGKSGGKASGSKNAQSRSSKA. An N6-acetyllysine mark is found at Lys-6 and Lys-10. Residue Gln-107 is modified to N5-methylglutamine.

The protein belongs to the histone H2A family. In terms of assembly, the nucleosome is a histone octamer containing two molecules each of H2A, H2B, H3 and H4 assembled in one H3-H4 heterotetramer and two H2A-H2B heterodimers. The octamer wraps approximately 147 bp of DNA. In terms of processing, acetylated by ESA1 to form H2AK4ac and H2AK7ac.

The protein localises to the nucleus. It localises to the chromosome. In terms of biological role, core component of nucleosome. Nucleosomes wrap and compact DNA into chromatin, limiting DNA accessibility to the cellular machineries which require DNA as a template. Histones thereby play a central role in transcription regulation, DNA repair, DNA replication and chromosomal stability. DNA accessibility is regulated via a complex set of post-translational modifications of histones, also called histone code, and nucleosome remodeling. The polypeptide is Histone H2A (HTA1) (Gibberella zeae (strain ATCC MYA-4620 / CBS 123657 / FGSC 9075 / NRRL 31084 / PH-1) (Wheat head blight fungus)).